We begin with the raw amino-acid sequence, 2133 residues long: Coagulation factor VIII (2133 aa).

The signal sequence occupies residues 1 to 19; that stretch reads MQLELSTCVFLCLLPLGFS. 4 Plastocyanin-like domains span residues 20 to 199, 207 to 357, 399 to 573, and 583 to 730; these read AIRR…LLVC, ERTQ…QLRR, KTWV…LLIC, and NQMM…VYSC. F5/8 type A domains follow at residues 20 to 357 and 399 to 730; these read AIRR…QLRR and KTWV…VYSC. Residues C173 and C199 are joined by a disulfide bond. N-linked (GlcNAc...) asparagine glycans are attached at residues N233 and N259. C547 and C573 are oxidised to a cystine. N-linked (GlcNAc...) asparagine glycosylation is present at N601. Y737, Y738, and Y742 each carry sulfotyrosine. Disordered stretches follow at residues 760-790 and 804-914; these read SFAQ…LDPQ and PSGD…PHPQ. Residues 760–1599 form a b region; it reads SFAQNSRPPS…LISYPDDQEQ (840 aa). Polar residues predominate over residues 761–780; that stretch reads FAQNSRPPSASQKQFQTITS. Basic and acidic residues-rich tracts occupy residues 853–862 and 868–878; these read LRPELHHSAE and EPEKELKKLDS. Positions 879 to 888 are enriched in low complexity; sequence KMSSSSDLLK. The span at 889 to 900 shows a compositional bias: polar residues; sequence TSPTIPSDTLSA. Residues N929, N985, and N1025 are each glycosylated (N-linked (GlcNAc...) asparagine). Residues 1042 to 1078 form a disordered region; that stretch reads LGKNPLSSERGPSPELLTSSGSGKSVKGQSSGQGRIR. A compositionally biased stretch (low complexity) spans 1060 to 1075; sequence SSGSGKSVKGQSSGQG. An N-linked (GlcNAc...) asparagine glycan is attached at N1111. Positions 1160–1179 are disordered; the sequence is PSVEGFDGGSHAPVPQDSRS. N-linked (GlcNAc...) asparagine glycosylation is found at N1181, N1208, N1245, N1265, and N1335. A disordered region spans residues 1200 to 1221; sequence EAPLEAPGNRTGPGPRSAVPRR. Disordered stretches follow at residues 1358–1391 and 1406–1441; these read LNKV…KSTA and ESNH…APKP. Residues 1378–1387 are compositionally biased toward basic and acidic residues; sequence KEWESLEKSP. N-linked (GlcNAc...) asparagine glycosylation is found at N1408 and N1611. 2 consecutive Plastocyanin-like domains span residues 1495–1659 and 1669–1822; these read RTRH…LLIC and GRQV…SKEC. One can recognise an F5/8 type A 3 domain in the interval 1495–1822; sequence RTRHYFIAAV…TTFLVYSKEC (328 aa). Disulfide bonds link C1633-C1659, C1822-C1970, and C1975-C2127. F5/8 type C domains follow at residues 1822 to 1970 and 1975 to 2127; these read CQAP…LMGC and CSMP…VLGC. N1919 is a glycosylation site (N-linked (GlcNAc...) asparagine).

The protein belongs to the multicopper oxidase family. Interacts with vWF. vWF binding is essential for the stabilization of F8 in circulation. Post-translationally, proteolytically cleaved by cathepsin CTSG to produce a partially activated form.

The protein resides in the secreted. The protein localises to the extracellular space. Its function is as follows. Factor VIII, along with calcium and phospholipid, acts as a cofactor for factor IXa when it converts factor X to the activated form, factor Xa. In Sus scrofa (Pig), this protein is Coagulation factor VIII (F8).